Reading from the N-terminus, the 628-residue chain is EIN3-binding F-box protein 1 (628 aa).

The region spanning 61–109 (PVSIDVLPDECLFEIFRRLSGPQERSACAFVSKQWLTLVSSIRQKEIDV) is the F-box domain.

In terms of assembly, part of a SCF (SKP1-cullin-F-box) protein ligase complex. Interacts with CUL1, SKP1A/ASK1, SKP1B/ASK2, ASK11, ASK12, ASK13, ASK18, EIN3, and EIL1. In terms of tissue distribution, ubiquitous.

Its subcellular location is the nucleus. It functions in the pathway protein modification; protein ubiquitination. In terms of biological role, component of SCF(EBF1) E3 ubiquitin ligase complexes, which may mediate the ubiquitination and subsequent proteasomal degradation of target proteins (probably including EIN3 and EIL1). Regulator of the ethylene signaling cascade by modulating the stability of EIN3 and EIL1 proteins. Confers insensitivity to ethylene. The polypeptide is EIN3-binding F-box protein 1 (EBF1) (Arabidopsis thaliana (Mouse-ear cress)).